An 84-amino-acid chain; its full sequence is MAETDSKAPAKAKPAALRKGALVKVNRSAYNDSLEAAASDPTAPDYIFEGPGELLLVKGDYGQVRWNRPVPDVWLRMDQLESCG.

The protein belongs to the complex I NdhO subunit family. NDH-1 can be composed of about 15 different subunits; different subcomplexes with different compositions have been identified which probably have different functions.

The protein resides in the cellular thylakoid membrane. The catalysed reaction is a plastoquinone + NADH + (n+1) H(+)(in) = a plastoquinol + NAD(+) + n H(+)(out). It carries out the reaction a plastoquinone + NADPH + (n+1) H(+)(in) = a plastoquinol + NADP(+) + n H(+)(out). NDH-1 shuttles electrons from an unknown electron donor, via FMN and iron-sulfur (Fe-S) centers, to quinones in the respiratory and/or the photosynthetic chain. The immediate electron acceptor for the enzyme in this species is believed to be plastoquinone. Couples the redox reaction to proton translocation, and thus conserves the redox energy in a proton gradient. Cyanobacterial NDH-1 also plays a role in inorganic carbon-concentration. The chain is NAD(P)H-quinone oxidoreductase subunit O from Parasynechococcus marenigrum (strain WH8102).